We begin with the raw amino-acid sequence, 516 residues long: MVRKIFQTNAELKDWLSEQNSAIIFIPTMGGLHPGHQYLIQKAKERKTNTNQIILVSIFVNPLQFSKGEDFKKYPRNINRDAELAFSAGADAIWAPDYDEVFPGGADSHFKIEVPKTLHNQLCGAERKGHFDGVATVIIRLIKIIKPKKLVLGEKDWQQLIIIRKLFQELSIPVKIESYSTQRDQSGFAYSSRNSYLSDSERVNAQSLPNAIKEAKTEFDKGKVINLTKIASIFKENNLKIEYLKIVDPFSLKETENINRLCLLAVAVKCGSTRLIDHTFLMHRKPIIAIDGPAGAGKSTVTKAFAKKLGFIYLDTGAMYRAVTWLIISNSIDPNDQVEIKNILKDSKLEFKSSSFVEQKIFINNIDVTEKIRSPKVTSMVSEIAKQQFVRELLTRKQQVIGNNGGLVAEGRDIGTAVFPDADLKIFLTASPTERAKRRALDLHKRGYEFSSIEDLEKEIKERDKKDSERKIAPLKKAQDAIELVTDGMNIEDVLKELIDIFRSKIPEEVWPTPNS.

Residues 1-279 (MVRKIFQTNA…CGSTRLIDHT (279 aa)) are pantoate--beta-alanine ligase. Residue 29–36 (MGGLHPGH) participates in ATP binding. Residue His36 is the Proton donor of the active site. Position 64 (Gln64) interacts with (R)-pantoate. Gln64 contributes to the beta-alanine binding site. ATP is bound at residue 153 to 156 (GEKD). Gln159 is a binding site for (R)-pantoate. 190–193 (YSSR) contacts ATP. A cytidylate kinase region spans residues 280 to 516 (FLMHRKPIIA…PEEVWPTPNS (237 aa)).

The protein in the N-terminal section; belongs to the pantothenate synthetase family. In the C-terminal section; belongs to the cytidylate kinase family. Type 1 subfamily.

The protein resides in the cytoplasm. The enzyme catalyses (R)-pantoate + beta-alanine + ATP = (R)-pantothenate + AMP + diphosphate + H(+). It catalyses the reaction CMP + ATP = CDP + ADP. The catalysed reaction is dCMP + ATP = dCDP + ADP. It participates in cofactor biosynthesis; (R)-pantothenate biosynthesis; (R)-pantothenate from (R)-pantoate and beta-alanine: step 1/1. Catalyzes the condensation of pantoate with beta-alanine in an ATP-dependent reaction via a pantoyl-adenylate intermediate. In terms of biological role, catalyzes the transfer of a phosphate group from ATP to either CMP or dCMP to form CDP or dCDP and ADP, respectively. This chain is Bifunctional pantoate ligase/cytidylate kinase, found in Prochlorococcus marinus (strain NATL1A).